The primary structure comprises 485 residues: Glutamate--tRNA ligase (485 aa).

Residues 12 to 22 (PSPTGEPHVGT) carry the 'HIGH' region motif. A 'KMSKS' region motif is present at residues 253–257 (KLSKR). Lysine 256 serves as a coordination point for ATP.

Belongs to the class-I aminoacyl-tRNA synthetase family. Glutamate--tRNA ligase type 1 subfamily. Monomer.

The protein resides in the cytoplasm. It catalyses the reaction tRNA(Glu) + L-glutamate + ATP = L-glutamyl-tRNA(Glu) + AMP + diphosphate. Its function is as follows. Catalyzes the attachment of glutamate to tRNA(Glu) in a two-step reaction: glutamate is first activated by ATP to form Glu-AMP and then transferred to the acceptor end of tRNA(Glu). The chain is Glutamate--tRNA ligase from Rhizobium meliloti (strain 1021) (Ensifer meliloti).